Here is a 229-residue protein sequence, read N- to C-terminus: Trehalose-6-phosphate phosphatase-related protein (229 aa).

The Nucleophile role is filled by aspartate 5. Positions 5, 7, and 177 each coordinate Mg(2+). 5–7 contacts substrate; the sequence is DYD.

It belongs to the trehalose phosphatase family. Mg(2+) is required as a cofactor.

It carries out the reaction alpha,alpha-trehalose 6-phosphate + H2O = alpha,alpha-trehalose + phosphate. It participates in glycan biosynthesis; trehalose biosynthesis. In terms of biological role, removes the phosphate from trehalose 6-phosphate (Tre6P) to produce free trehalose. Also catalyzes the dephosphorylation of para-nitrophenyl phosphate (pNPP), but with lesser efficiency (in vitro). The chain is Trehalose-6-phosphate phosphatase-related protein from Thermoplasma acidophilum (strain ATCC 25905 / DSM 1728 / JCM 9062 / NBRC 15155 / AMRC-C165).